Reading from the N-terminus, the 495-residue chain is Cytochrome P450 2E1 (495 aa).

Residue 298–303 coordinates substrate; the sequence is FAGTET. Residue Cys437 coordinates heme.

The protein belongs to the cytochrome P450 family. In terms of assembly, interacts with chaperones HSP70 and HSP90; this interaction is required for initial targeting to mitochondria. Heme serves as cofactor.

Its subcellular location is the endoplasmic reticulum membrane. The protein localises to the microsome membrane. It is found in the mitochondrion inner membrane. The catalysed reaction is an organic molecule + reduced [NADPH--hemoprotein reductase] + O2 = an alcohol + oxidized [NADPH--hemoprotein reductase] + H2O + H(+). The enzyme catalyses (5Z,8Z,11Z)-eicosatrienoate + reduced [NADPH--hemoprotein reductase] + O2 = 19-hydroxy-(5Z,8Z,11Z)-eicosatrienoate + oxidized [NADPH--hemoprotein reductase] + H2O + H(+). It carries out the reaction (5Z,8Z,11Z,14Z,17Z)-eicosapentaenoate + reduced [NADPH--hemoprotein reductase] + O2 = 19-hydroxy-(5Z,8Z,11Z,14Z,17Z)-eicosapentaenoate + oxidized [NADPH--hemoprotein reductase] + H2O + H(+). It catalyses the reaction (4Z,7Z,10Z,13Z,16Z,19Z)-docosahexaenoate + reduced [NADPH--hemoprotein reductase] + O2 = 21-hydroxy-(4Z,7Z,10Z,13Z,16Z,19Z)-docosahexaenoate + oxidized [NADPH--hemoprotein reductase] + H2O + H(+). The catalysed reaction is dodecanoate + reduced [NADPH--hemoprotein reductase] + O2 = 11-hydroxydodecanoate + oxidized [NADPH--hemoprotein reductase] + H2O + H(+). The enzyme catalyses tetradecanoate + reduced [NADPH--hemoprotein reductase] + O2 = 13-hydroxytetradecanoate + oxidized [NADPH--hemoprotein reductase] + H2O + H(+). It carries out the reaction 4-nitrophenol + NADPH + O2 + H(+) = 4-nitrocatechol + NADP(+) + H2O. Its pathway is lipid metabolism; fatty acid metabolism. The omega-1 hydroxylase activity is stimulated by cytochrome b5. Functionally, a cytochrome P450 monooxygenase involved in the metabolism of fatty acids. Mechanistically, uses molecular oxygen inserting one oxygen atom into a substrate, and reducing the second into a water molecule, with two electrons provided by NADPH via cytochrome P450 reductase (NADPH--hemoprotein reductase). Catalyzes the hydroxylation of carbon-hydrogen bonds. Hydroxylates fatty acids specifically at the omega-1 position displaying the highest catalytic activity for saturated fatty acids. May be involved in the oxidative metabolism of xenobiotics. The sequence is that of Cytochrome P450 2E1 (CYP2E1) from Sus scrofa (Pig).